The chain runs to 864 residues: Probable LRR receptor-like serine/threonine-protein kinase At1g07550 (864 aa).

The first 23 residues, 1 to 23, serve as a signal peptide directing secretion; it reads MDTCTRLLFAACATLSILHLVQS. The Extracellular segment spans residues 24–507; the sequence is QNQQGFISLD…SCGTRFPTAA (484 aa). N-linked (GlcNAc...) asparagine glycosylation is found at Asn49, Asn229, Asn256, Asn289, Asn432, Asn445, and Asn464. LRR repeat units follow at residues 411–434, 435–457, and 459–480; these read RIVK…QNLT, QLQE…LAKM, and YLLV…ALLD. A helical transmembrane segment spans residues 508 to 528; the sequence is VAASVSAVAIIILVLVLIFVL. Over 529–864 the chain is Cytoplasmic; the sequence is RRRKPSAGKV…VDTEINPKAR (336 aa). Thr551 is modified (phosphothreonine). The Protein kinase domain maps to 560-831; that stretch reads NNFQVVIGKG…QVVHVLNECL (272 aa). ATP contacts are provided by residues 566 to 574 and Lys587; that span reads IGKGGFGVV. Tyr632 is subject to Phosphotyrosine. The active-site Proton acceptor is Asp684. Thr718 and Thr723 each carry phosphothreonine. Tyr731 is subject to Phosphotyrosine.

Belongs to the protein kinase superfamily. Ser/Thr protein kinase family.

It is found in the membrane. The catalysed reaction is L-seryl-[protein] + ATP = O-phospho-L-seryl-[protein] + ADP + H(+). It catalyses the reaction L-threonyl-[protein] + ATP = O-phospho-L-threonyl-[protein] + ADP + H(+). This chain is Probable LRR receptor-like serine/threonine-protein kinase At1g07550, found in Arabidopsis thaliana (Mouse-ear cress).